We begin with the raw amino-acid sequence, 246 residues long: 3-deoxy-manno-octulosonate cytidylyltransferase (246 aa).

This sequence belongs to the KdsB family.

The protein resides in the cytoplasm. It carries out the reaction 3-deoxy-alpha-D-manno-oct-2-ulosonate + CTP = CMP-3-deoxy-beta-D-manno-octulosonate + diphosphate. It functions in the pathway nucleotide-sugar biosynthesis; CMP-3-deoxy-D-manno-octulosonate biosynthesis; CMP-3-deoxy-D-manno-octulosonate from 3-deoxy-D-manno-octulosonate and CTP: step 1/1. Its pathway is bacterial outer membrane biogenesis; lipopolysaccharide biosynthesis. Its function is as follows. Activates KDO (a required 8-carbon sugar) for incorporation into bacterial lipopolysaccharide in Gram-negative bacteria. The sequence is that of 3-deoxy-manno-octulosonate cytidylyltransferase from Rickettsia prowazekii (strain Madrid E).